Reading from the N-terminus, the 367-residue chain is Peptide chain release factor 2 (367 aa).

Q250 carries the post-translational modification N5-methylglutamine.

The protein belongs to the prokaryotic/mitochondrial release factor family. In terms of processing, methylated by PrmC. Methylation increases the termination efficiency of RF2.

It is found in the cytoplasm. Its function is as follows. Peptide chain release factor 2 directs the termination of translation in response to the peptide chain termination codons UGA and UAA. The polypeptide is Peptide chain release factor 2 (Mycobacteroides abscessus (strain ATCC 19977 / DSM 44196 / CCUG 20993 / CIP 104536 / JCM 13569 / NCTC 13031 / TMC 1543 / L948) (Mycobacterium abscessus)).